A 114-amino-acid polypeptide reads, in one-letter code: UPF0757 protein YmgG (114 aa).

Belongs to the UPF0757 family.

The protein is UPF0757 protein YmgG of Shigella flexneri.